The sequence spans 186 residues: MSVADIKKSVEQKMQRSIEAFKNDLAKIRTGRAHTGLLDHVQVDYYGSMVPISQVANLTLVDARTIGVQPWEKTMVAKVEKAIREADLGLNPATSGDLIRVPMPPLTEERRRELTKVVKSEGETAKVAVRNLRRDANEQLKKLVKDKEISEDDERRASDDVQKLTDKHVAEIDKLVQAKDAEIMTV.

It belongs to the RRF family.

It is found in the cytoplasm. Responsible for the release of ribosomes from messenger RNA at the termination of protein biosynthesis. May increase the efficiency of translation by recycling ribosomes from one round of translation to another. The chain is Ribosome-recycling factor from Burkholderia mallei (strain NCTC 10247).